The chain runs to 196 residues: UMP-CMP kinase (196 aa).

13 to 18 contributes to the ATP binding site; that stretch reads GAGKGT. S33 carries the post-translational modification Phosphoserine. The NMP stretch occupies residues 33–63; sequence SAGELLRDERKNPDSQYGELIEKYIKEGKIV. R39 is an a ribonucleoside 5'-phosphate binding site. N6-acetyllysine is present on residues K43 and K55. 61–63 contacts a ribonucleoside 5'-phosphate; that stretch reads KIV. K73 participates in a covalent cross-link: Glycyl lysine isopeptide (Lys-Gly) (interchain with G-Cter in SUMO2). A ribonucleoside 5'-phosphate is bound at residue 93-96; the sequence is GFPR. N100 lines the CMP pocket. An N6-succinyllysine modification is found at K106. Residues 133–143 form an LID region; that stretch reads ERGKSSGRSDD. Residue R134 coordinates ATP. Positions 140 and 151 each coordinate a ribonucleoside 5'-phosphate. K179 provides a ligand contact to ATP. S180 carries the phosphoserine modification.

This sequence belongs to the adenylate kinase family. UMP-CMP kinase subfamily. In terms of assembly, monomer. The cofactor is Mg(2+).

It localises to the nucleus. The protein localises to the cytoplasm. The catalysed reaction is CMP + ATP = CDP + ADP. The enzyme catalyses dCMP + ATP = dCDP + ADP. It carries out the reaction UMP + ATP = UDP + ADP. It catalyses the reaction a 2'-deoxyribonucleoside 5'-diphosphate + ATP = a 2'-deoxyribonucleoside 5'-triphosphate + ADP. The catalysed reaction is a ribonucleoside 5'-diphosphate + ATP = a ribonucleoside 5'-triphosphate + ADP. Functionally, catalyzes the phosphorylation of pyrimidine nucleoside monophosphates at the expense of ATP. Plays an important role in de novo pyrimidine nucleotide biosynthesis. Has preference for UMP and CMP as phosphate acceptors. Also displays broad nucleoside diphosphate kinase activity. The polypeptide is UMP-CMP kinase (Cmpk1) (Mus musculus (Mouse)).